A 235-amino-acid chain; its full sequence is Small ribosomal subunit protein uS2 (235 aa).

It belongs to the universal ribosomal protein uS2 family.

This chain is Small ribosomal subunit protein uS2, found in Geobacillus thermodenitrificans (strain NG80-2).